A 276-amino-acid polypeptide reads, in one-letter code: Ribosomal RNA small subunit methyltransferase A (276 aa).

S-adenosyl-L-methionine is bound by residues Asn-24, Leu-26, Gly-51, Glu-72, Asp-97, and Asn-118.

It belongs to the class I-like SAM-binding methyltransferase superfamily. rRNA adenine N(6)-methyltransferase family. RsmA subfamily.

The protein localises to the cytoplasm. The enzyme catalyses adenosine(1518)/adenosine(1519) in 16S rRNA + 4 S-adenosyl-L-methionine = N(6)-dimethyladenosine(1518)/N(6)-dimethyladenosine(1519) in 16S rRNA + 4 S-adenosyl-L-homocysteine + 4 H(+). Specifically dimethylates two adjacent adenosines (A1518 and A1519) in the loop of a conserved hairpin near the 3'-end of 16S rRNA in the 30S particle. May play a critical role in biogenesis of 30S subunits. This Clostridium acetobutylicum (strain ATCC 824 / DSM 792 / JCM 1419 / IAM 19013 / LMG 5710 / NBRC 13948 / NRRL B-527 / VKM B-1787 / 2291 / W) protein is Ribosomal RNA small subunit methyltransferase A.